A 31-amino-acid chain; its full sequence is Cyclotide psybry C (31 aa).

The cyclopeptide (Gly-Asn) cross-link spans 1–31 (GFNPCGETCQIDQTCHAPGCTCSIANICVRN). 3 disulfides stabilise this stretch: cysteine 5/cysteine 20, cysteine 9/cysteine 22, and cysteine 15/cysteine 28.

Post-translationally, this is a cyclic peptide.

In terms of biological role, probably participates in a plant defense mechanism. In Psychotria brachyceras, this protein is Cyclotide psybry C.